A 235-amino-acid polypeptide reads, in one-letter code: Putative uridine kinase C227.14 (235 aa).

36–43 contacts ATP; sequence GGPGSGKS.

It belongs to the uridine kinase family.

Its subcellular location is the cytoplasm. The protein resides in the nucleus. The enzyme catalyses uridine + ATP = UMP + ADP + H(+). The catalysed reaction is cytidine + ATP = CMP + ADP + H(+). Its pathway is pyrimidine metabolism; CTP biosynthesis via salvage pathway; CTP from cytidine: step 1/3. The protein operates within pyrimidine metabolism; UMP biosynthesis via salvage pathway; UMP from uridine: step 1/1. This is Putative uridine kinase C227.14 from Schizosaccharomyces pombe (strain 972 / ATCC 24843) (Fission yeast).